The chain runs to 563 residues: Glucocorticoid modulatory element-binding protein 1 (563 aa).

Position 2 is an N-acetylalanine (A2). The region spanning 72–156 (ASTIEANEDM…RKMMDSGQID (85 aa)) is the SAND domain. C103 is a Zn(2+) binding site. DNA is bound by residues K129, K133, K136, and R147. The Zn(2+) site is built by H160, C164, and C168. Residues 304 to 355 (MDTVKKVLDNRKNQVEQGEEQFLYTLTDLERQLEEQKKQAQDHRLKSQTVQN) are a coiled coil. Positions 360–385 (PVSTPKPPKRPRLQRPASTTVLSPSP) are disordered.

In terms of assembly, homodimer, and heterodimer of GMEB1 and GMEB2. Interacts with TRIM63. Interacts with the glucocorticoid receptor (NR3C1) and NCOA2/TIF2. May interact with HSP27 and CREB-binding protein (CBP).

It localises to the nucleus. It is found in the cytoplasm. Trans-acting factor that binds to glucocorticoid modulatory elements (GME) present in the TAT (tyrosine aminotransferase) promoter and increases sensitivity to low concentrations of glucocorticoids. Also binds to the transferrin receptor promoter. The sequence is that of Glucocorticoid modulatory element-binding protein 1 (GMEB1) from Bos taurus (Bovine).